The chain runs to 321 residues: Lipoyl synthase (321 aa).

The [4Fe-4S] cluster site is built by cysteine 68, cysteine 73, cysteine 79, cysteine 94, cysteine 98, cysteine 101, and serine 308. Residues 80–297 (FNHGTATFMI…KALADELGFT (218 aa)) form the Radical SAM core domain.

This sequence belongs to the radical SAM superfamily. Lipoyl synthase family. [4Fe-4S] cluster is required as a cofactor.

Its subcellular location is the cytoplasm. The catalysed reaction is [[Fe-S] cluster scaffold protein carrying a second [4Fe-4S](2+) cluster] + N(6)-octanoyl-L-lysyl-[protein] + 2 oxidized [2Fe-2S]-[ferredoxin] + 2 S-adenosyl-L-methionine + 4 H(+) = [[Fe-S] cluster scaffold protein] + N(6)-[(R)-dihydrolipoyl]-L-lysyl-[protein] + 4 Fe(3+) + 2 hydrogen sulfide + 2 5'-deoxyadenosine + 2 L-methionine + 2 reduced [2Fe-2S]-[ferredoxin]. It participates in protein modification; protein lipoylation via endogenous pathway; protein N(6)-(lipoyl)lysine from octanoyl-[acyl-carrier-protein]: step 2/2. Catalyzes the radical-mediated insertion of two sulfur atoms into the C-6 and C-8 positions of the octanoyl moiety bound to the lipoyl domains of lipoate-dependent enzymes, thereby converting the octanoylated domains into lipoylated derivatives. The polypeptide is Lipoyl synthase (Shewanella baltica (strain OS185)).